Here is a 521-residue protein sequence, read N- to C-terminus: Medium/long-chain-fatty-acid--[acyl-carrier-protein] ligase MbtM (521 aa).

It belongs to the ATP-dependent AMP-binding enzyme family.

It carries out the reaction a long-chain fatty acid + holo-[ACP] + ATP = a long-chain fatty acyl-[ACP] + AMP + diphosphate. The enzyme catalyses a medium-chain fatty acid + holo-[ACP] + ATP = a medium-chain fatty acyl-[ACP] + AMP + diphosphate. It participates in siderophore biosynthesis; mycobactin biosynthesis. In terms of biological role, activates lipidic moieties required for mycobactin biosynthesis. Converts medium- to long-chain aliphatic fatty acids into acyl adenylate, which is further transferred on to the phosphopantetheine arm of the carrier protein MbtL. This Mycobacterium bovis (strain ATCC BAA-935 / AF2122/97) protein is Medium/long-chain-fatty-acid--[acyl-carrier-protein] ligase MbtM (mbtM).